The chain runs to 98 residues: MALTKIELAESLVEKCGFDKRIAKLFVEQFFEEIRSSLEKGEEVKLSGFGNFSLREKNARPGRNPKTGETVAVTARRVVVFKPGQKLRDRVENVKVKA.

It belongs to the bacterial histone-like protein family. In terms of assembly, heterodimer of an alpha and a beta chain.

In terms of biological role, this protein is one of the two subunits of integration host factor, a specific DNA-binding protein that functions in genetic recombination as well as in transcriptional and translational control. This is Integration host factor subunit alpha from Actinobacillus pleuropneumoniae serotype 5b (strain L20).